Reading from the N-terminus, the 340-residue chain is Ferrochelatase (340 aa).

Fe cation is bound by residues H189 and E292.

Belongs to the ferrochelatase family.

Its subcellular location is the cytoplasm. The catalysed reaction is heme b + 2 H(+) = protoporphyrin IX + Fe(2+). It functions in the pathway porphyrin-containing compound metabolism; protoheme biosynthesis; protoheme from protoporphyrin-IX: step 1/1. Functionally, catalyzes the ferrous insertion into protoporphyrin IX. The polypeptide is Ferrochelatase (Pseudomonas fluorescens (strain ATCC BAA-477 / NRRL B-23932 / Pf-5)).